A 277-amino-acid chain; its full sequence is Large ribosomal subunit protein uL2 (277 aa).

Residues 219-277 (TVRGSVMNPNDHPHGGGEGKAPVGRKAPSTPWGKPALGLKTRNKKAKSDKLIVRRRNEK) form a disordered region. Residues 264 to 277 (AKSDKLIVRRRNEK) are compositionally biased toward basic and acidic residues.

The protein belongs to the universal ribosomal protein uL2 family. In terms of assembly, part of the 50S ribosomal subunit. Forms a bridge to the 30S subunit in the 70S ribosome.

Its function is as follows. One of the primary rRNA binding proteins. Required for association of the 30S and 50S subunits to form the 70S ribosome, for tRNA binding and peptide bond formation. It has been suggested to have peptidyltransferase activity; this is somewhat controversial. Makes several contacts with the 16S rRNA in the 70S ribosome. This is Large ribosomal subunit protein uL2 from Streptococcus pneumoniae serotype 2 (strain D39 / NCTC 7466).